We begin with the raw amino-acid sequence, 249 residues long: Probable transcriptional regulatory protein HY04AAS1_0501 (249 aa).

It belongs to the TACO1 family.

The protein resides in the cytoplasm. This chain is Probable transcriptional regulatory protein HY04AAS1_0501, found in Hydrogenobaculum sp. (strain Y04AAS1).